The primary structure comprises 149 residues: Nucleoside diphosphate kinase (149 aa).

Residues Lys11, Phe59, Arg87, Thr93, Arg104, and Asn114 each contribute to the ATP site. His117 serves as the catalytic Pros-phosphohistidine intermediate.

Belongs to the NDK family. As to quaternary structure, homotetramer. Requires Mg(2+) as cofactor.

The protein resides in the cytoplasm. It carries out the reaction a 2'-deoxyribonucleoside 5'-diphosphate + ATP = a 2'-deoxyribonucleoside 5'-triphosphate + ADP. The catalysed reaction is a ribonucleoside 5'-diphosphate + ATP = a ribonucleoside 5'-triphosphate + ADP. Functionally, major role in the synthesis of nucleoside triphosphates other than ATP. The ATP gamma phosphate is transferred to the NDP beta phosphate via a ping-pong mechanism, using a phosphorylated active-site intermediate. This chain is Nucleoside diphosphate kinase, found in Treponema pallidum (strain Nichols).